The following is a 54-amino-acid chain: Ovomucoid (54 aa).

Positions 4 to 54 (VDCSDHPKPVCSLEYMPLCGSDSKTYSNKCDFCNAVVESNGTLTLSHFGKC) constitute a Kazal-like domain. 3 disulfides stabilise this stretch: C6-C36, C14-C33, and C22-C54. N43 is a glycosylation site (N-linked (GlcNAc...) asparagine).

The protein resides in the secreted. The polypeptide is Ovomucoid (Rhea americana (Greater rhea)).